The following is a 562-amino-acid chain: NAD-dependent malic enzyme 1 (562 aa).

The Proton donor role is filled by Y101. An NAD(+)-binding site is contributed by R154. Residue K172 is the Proton acceptor of the active site. 3 residues coordinate a divalent metal cation: E243, D244, and D267. NAD(+) is bound by residues D267 and N415.

It belongs to the malic enzymes family. In terms of assembly, homotetramer. Requires Mg(2+) as cofactor. Mn(2+) is required as a cofactor.

It carries out the reaction (S)-malate + NAD(+) = pyruvate + CO2 + NADH. It catalyses the reaction oxaloacetate + H(+) = pyruvate + CO2. The protein is NAD-dependent malic enzyme 1 of Vibrio vulnificus (strain YJ016).